The sequence spans 437 residues: RING finger protein 150 (437 aa).

Residues M1–A34 form the signal peptide. The Extracellular segment spans residues E35–S207. N-linked (GlcNAc...) asparagine glycans are attached at residues N45, N124, N152, and N185. One can recognise a PA domain in the interval S80 to L182. The helical transmembrane segment at V208–F228 threads the bilayer. Topologically, residues Y229–S437 are cytoplasmic. The RING-type; atypical zinc finger occupies C277–K318.

It is found in the membrane. In Mus musculus (Mouse), this protein is RING finger protein 150 (Rnf150).